The following is a 547-amino-acid chain: 2-succinyl-5-enolpyruvyl-6-hydroxy-3-cyclohexene-1-carboxylate synthase (547 aa).

Belongs to the TPP enzyme family. MenD subfamily. In terms of assembly, homodimer. The cofactor is Mg(2+). It depends on Mn(2+) as a cofactor. Thiamine diphosphate is required as a cofactor.

The enzyme catalyses isochorismate + 2-oxoglutarate + H(+) = 5-enolpyruvoyl-6-hydroxy-2-succinyl-cyclohex-3-ene-1-carboxylate + CO2. The protein operates within quinol/quinone metabolism; 1,4-dihydroxy-2-naphthoate biosynthesis; 1,4-dihydroxy-2-naphthoate from chorismate: step 2/7. Its pathway is quinol/quinone metabolism; menaquinone biosynthesis. In terms of biological role, catalyzes the thiamine diphosphate-dependent decarboxylation of 2-oxoglutarate and the subsequent addition of the resulting succinic semialdehyde-thiamine pyrophosphate anion to isochorismate to yield 2-succinyl-5-enolpyruvyl-6-hydroxy-3-cyclohexene-1-carboxylate (SEPHCHC). The chain is 2-succinyl-5-enolpyruvyl-6-hydroxy-3-cyclohexene-1-carboxylate synthase from Mycobacterium sp. (strain JLS).